The sequence spans 528 residues: Na(+)/H(+) antiporter NhaB (528 aa).

The next 10 membrane-spanning stretches (helical) occupy residues 28–50 (FLVI…VLVV), 67–87 (PGGL…SQVL), 98–118 (LLLV…LFVF), 140–160 (AFLS…AVAV), 240–260 (FFLR…FTCF), 305–325 (ALIG…VGLI), 350–370 (EEAL…GVII), 391–411 (LVIF…VFVG), 449–469 (ATPN…APLI), and 476–496 (MVWM…MAIE).

This sequence belongs to the NhaB Na(+)/H(+) (TC 2.A.34) antiporter family.

The protein localises to the cell inner membrane. The catalysed reaction is 2 Na(+)(in) + 3 H(+)(out) = 2 Na(+)(out) + 3 H(+)(in). Functionally, na(+)/H(+) antiporter that extrudes sodium in exchange for external protons. The chain is Na(+)/H(+) antiporter NhaB from Shewanella frigidimarina (strain NCIMB 400).